A 317-amino-acid chain; its full sequence is Transaldolase (317 aa).

K126 serves as the catalytic Schiff-base intermediate with substrate.

This sequence belongs to the transaldolase family. Type 1 subfamily. As to quaternary structure, homodimer.

The protein localises to the cytoplasm. It carries out the reaction D-sedoheptulose 7-phosphate + D-glyceraldehyde 3-phosphate = D-erythrose 4-phosphate + beta-D-fructose 6-phosphate. Its pathway is carbohydrate degradation; pentose phosphate pathway; D-glyceraldehyde 3-phosphate and beta-D-fructose 6-phosphate from D-ribose 5-phosphate and D-xylulose 5-phosphate (non-oxidative stage): step 2/3. Functionally, transaldolase is important for the balance of metabolites in the pentose-phosphate pathway. The chain is Transaldolase from Burkholderia orbicola (strain AU 1054).